We begin with the raw amino-acid sequence, 149 residues long: 3-dehydroquinate dehydratase (149 aa).

Tyr22 serves as the catalytic Proton acceptor. Substrate contacts are provided by Asn74, His80, and Asp87. Residue His100 is the Proton donor of the active site. Residues 101–102 and Arg111 each bind substrate; that span reads MS.

This sequence belongs to the type-II 3-dehydroquinase family. In terms of assembly, homododecamer.

It carries out the reaction 3-dehydroquinate = 3-dehydroshikimate + H2O. The protein operates within metabolic intermediate biosynthesis; chorismate biosynthesis; chorismate from D-erythrose 4-phosphate and phosphoenolpyruvate: step 3/7. Catalyzes a trans-dehydration via an enolate intermediate. The polypeptide is 3-dehydroquinate dehydratase (Leptothrix cholodnii (strain ATCC 51168 / LMG 8142 / SP-6) (Leptothrix discophora (strain SP-6))).